Consider the following 372-residue polypeptide: tRNA-specific 2-thiouridylase MnmA (372 aa).

ATP contacts are provided by residues 9-16 (GMSGGVDS) and methionine 35. Residues 95 to 97 (NPD) are interaction with target base in tRNA. Cysteine 100 (nucleophile) is an active-site residue. Cysteine 100 and cysteine 201 are oxidised to a cystine. Glycine 124 provides a ligand contact to ATP. Residues 151-153 (KDQ) form an interaction with tRNA region. Cysteine 201 functions as the Cysteine persulfide intermediate in the catalytic mechanism. The interval 317–318 (RY) is interaction with tRNA.

Belongs to the MnmA/TRMU family.

The protein resides in the cytoplasm. It carries out the reaction S-sulfanyl-L-cysteinyl-[protein] + uridine(34) in tRNA + AH2 + ATP = 2-thiouridine(34) in tRNA + L-cysteinyl-[protein] + A + AMP + diphosphate + H(+). Functionally, catalyzes the 2-thiolation of uridine at the wobble position (U34) of tRNA, leading to the formation of s(2)U34. This chain is tRNA-specific 2-thiouridylase MnmA, found in Janthinobacterium sp. (strain Marseille) (Minibacterium massiliensis).